The following is a 245-amino-acid chain: Ribonuclease PH (245 aa).

Phosphate contacts are provided by residues R86 and 124–126 (GTR).

This sequence belongs to the RNase PH family. Homohexameric ring arranged as a trimer of dimers.

The enzyme catalyses tRNA(n+1) + phosphate = tRNA(n) + a ribonucleoside 5'-diphosphate. In terms of biological role, phosphorolytic 3'-5' exoribonuclease that plays an important role in tRNA 3'-end maturation. Removes nucleotide residues following the 3'-CCA terminus of tRNAs; can also add nucleotides to the ends of RNA molecules by using nucleoside diphosphates as substrates, but this may not be physiologically important. Probably plays a role in initiation of 16S rRNA degradation (leading to ribosome degradation) during starvation. The chain is Ribonuclease PH from Bacillus cereus (strain B4264).